The sequence spans 329 residues: 4-hydroxythreonine-4-phosphate dehydrogenase (329 aa).

Substrate is bound by residues H136 and T137. Residues H166, H211, and H266 each coordinate a divalent metal cation. Substrate-binding residues include K274, N283, and R292.

This sequence belongs to the PdxA family. Homodimer. Zn(2+) is required as a cofactor. Mg(2+) serves as cofactor. Requires Co(2+) as cofactor.

It localises to the cytoplasm. The catalysed reaction is 4-(phosphooxy)-L-threonine + NAD(+) = 3-amino-2-oxopropyl phosphate + CO2 + NADH. The protein operates within cofactor biosynthesis; pyridoxine 5'-phosphate biosynthesis; pyridoxine 5'-phosphate from D-erythrose 4-phosphate: step 4/5. In terms of biological role, catalyzes the NAD(P)-dependent oxidation of 4-(phosphooxy)-L-threonine (HTP) into 2-amino-3-oxo-4-(phosphooxy)butyric acid which spontaneously decarboxylates to form 3-amino-2-oxopropyl phosphate (AHAP). The chain is 4-hydroxythreonine-4-phosphate dehydrogenase from Shigella flexneri serotype 5b (strain 8401).